Reading from the N-terminus, the 830-residue chain is Periplasmic nitrate reductase (830 aa).

The segment at residues 1 to 32 (MELNRRDFMKANAAVAAAAAAGITIPVKNVHA) is a signal peptide (tat-type signal). The 57-residue stretch at 39 to 95 (IRWDKAPCRYCGTGCSVLVGTKDGRVVATQGDPDAEVNRGLNCIKGYFLSKIMYGAD) folds into the 4Fe-4S Mo/W bis-MGD-type domain. [4Fe-4S] cluster contacts are provided by cysteine 46, cysteine 49, cysteine 53, and cysteine 81. Mo-bis(molybdopterin guanine dinucleotide) contacts are provided by residues lysine 83, glutamine 151, asparagine 176, cysteine 180, 213-220 (WGSNMAEM), 244-248 (STFEH), methionine 374, glutamine 378, asparagine 484, 510-511 (SD), lysine 533, aspartate 560, and 720-729 (TGRVLEHWHT). A substrate-binding site is contributed by phenylalanine 796. Mo-bis(molybdopterin guanine dinucleotide) is bound by residues asparagine 804 and lysine 821.

Belongs to the prokaryotic molybdopterin-containing oxidoreductase family. NasA/NapA/NarB subfamily. As to quaternary structure, component of the periplasmic nitrate reductase NapAB complex composed of NapA and NapB. [4Fe-4S] cluster serves as cofactor. Requires Mo-bis(molybdopterin guanine dinucleotide) as cofactor. In terms of processing, predicted to be exported by the Tat system. The position of the signal peptide cleavage has not been experimentally proven.

The protein localises to the periplasm. The enzyme catalyses 2 Fe(II)-[cytochrome] + nitrate + 2 H(+) = 2 Fe(III)-[cytochrome] + nitrite + H2O. Its function is as follows. Catalytic subunit of the periplasmic nitrate reductase complex NapAB. Receives electrons from NapB and catalyzes the reduction of nitrate to nitrite. The chain is Periplasmic nitrate reductase from Mannheimia succiniciproducens (strain KCTC 0769BP / MBEL55E).